A 314-amino-acid polypeptide reads, in one-letter code: Serine/threonine-protein phosphatase PP2A-4 catalytic subunit (314 aa).

The Mn(2+) site is built by Asp62, His64, Asp90, and Asn122. His123 acts as the Proton donor in catalysis. Mn(2+) is bound by residues His172 and His246.

Belongs to the PPP phosphatase family. PP-2A subfamily. Requires Mn(2+) as cofactor.

The protein localises to the cytoplasm. The catalysed reaction is O-phospho-L-seryl-[protein] + H2O = L-seryl-[protein] + phosphate. It catalyses the reaction O-phospho-L-threonyl-[protein] + H2O = L-threonyl-[protein] + phosphate. This Oryza sativa subsp. japonica (Rice) protein is Serine/threonine-protein phosphatase PP2A-4 catalytic subunit (PP2A4).